Reading from the N-terminus, the 159-residue chain is Cytochrome c-type biogenesis protein CcmE (159 aa).

Topologically, residues 1-8 (MNLRRKNR) are cytoplasmic. Residues 9–29 (LWVVCAVLAGLALTTALVLYA) traverse the membrane as a helical; Signal-anchor for type II membrane protein segment. The Periplasmic segment spans residues 30–159 (LRANIDLFYT…PQRADKDTSS (130 aa)). The interval 129–159 (KHDENYTPPEVEKAMQENHRRPQRADKDTSS) is disordered. Heme contacts are provided by His130 and Tyr134.

This sequence belongs to the CcmE/CycJ family.

It is found in the cell inner membrane. Functionally, heme chaperone required for the biogenesis of c-type cytochromes. Transiently binds heme delivered by CcmC and transfers the heme to apo-cytochromes in a process facilitated by CcmF and CcmH. This is Cytochrome c-type biogenesis protein CcmE from Salmonella paratyphi A (strain ATCC 9150 / SARB42).